Reading from the N-terminus, the 455-residue chain is Phosphoglucosamine/phosphogalactosamine mutase (455 aa).

The active-site Phosphoserine intermediate is the S97. The Mg(2+) site is built by S97, D241, D243, and D245. S97 carries the post-translational modification Phosphoserine.

The protein belongs to the phosphohexose mutase family. Mg(2+) serves as cofactor. Post-translationally, activated by phosphorylation.

It carries out the reaction alpha-D-glucosamine 1-phosphate = D-glucosamine 6-phosphate. It catalyses the reaction D-galactosamine 6-phosphate = alpha-D-galactosamine 1-phosphate. Its function is as follows. Involved in the synthesis of UDP-N-acetylglucosamine (UDP-GlcNAc) and UDP-N-acetylgalactosamine (UDP-GalNAc). Catalyzes the conversion of glucosamine-6-phosphate to glucosamine-1-phosphate and of galactosamine-6-phosphate to galactosamine-1-phosphate. This chain is Phosphoglucosamine/phosphogalactosamine mutase, found in Sulfurisphaera tokodaii (strain DSM 16993 / JCM 10545 / NBRC 100140 / 7) (Sulfolobus tokodaii).